The chain runs to 221 residues: Flagellar L-ring protein 2 (221 aa).

Positions 1 to 16 (MKRFLILTPMVLALCG) are cleaved as a signal peptide. A lipid anchor (N-palmitoyl cysteine) is attached at C17. C17 carries S-diacylglycerol cysteine lipidation.

This sequence belongs to the FlgH family. In terms of assembly, the basal body constitutes a major portion of the flagellar organelle and consists of four rings (L,P,S, and M) mounted on a central rod.

It localises to the cell outer membrane. The protein resides in the bacterial flagellum basal body. Its function is as follows. Assembles around the rod to form the L-ring and probably protects the motor/basal body from shearing forces during rotation. This Yersinia pseudotuberculosis serotype I (strain IP32953) protein is Flagellar L-ring protein 2.